Reading from the N-terminus, the 429-residue chain is Sex determination protein fox-1 (429 aa).

Residues 156–180 are compositionally biased toward low complexity; the sequence is ATTAGSTNGSAAVTQPDPSTSSGPD. Residues 156–188 are disordered; sequence ATTAGSTNGSAAVTQPDPSTSSGPDGPKRLHVS. The 77-residue stretch at 183–259 folds into the RRM domain; that stretch reads KRLHVSNIPF…RKIEVNCATA (77 aa).

In terms of assembly, interacts with sup-12. In males and hermaphrodites expressed in a subset of cells in the head and tail. Expressed in the pharynx, intestine and in muscles from the vulva and body wall.

It is found in the nucleus. Functionally, RNA-binding protein that regulates tissue-specific alternative splicing events by binding to 5'-UGCAUG-3' and 5'-GCACG-3' elements. Also binds to poly(A), poly(G), poly(C), or poly(U) stretches of RNA. Plays a role in the sex determination pathway and X chromosome dosage compensation, and together with sex-1 is involved in making the distinction between one and two X-chromosomes. Binds to 5'-GCAUG-3' and 5'-GCACG-3' elements in intron 6 of the pre-mRNA of the sex-determining factor xol-1 to promote its alternative splicing and together with sex-1 negatively regulates the expression of xol-1 to promote hermaphrodite development. Negatively regulates the expression of the active isoform of xol-1 (isoform b) by promoting intron 6 retention and the deletion of exon 7 coding sequences in hermaphrodite embryos. Furthermore, binding to the pre-mRNA of xol-1 can also direct the use of an alternative 3' splice site enabling the xol-1 transcript to be trans-spliced to unrelated genes on chromosome 2, which also leads to xol-1 exon 7 deletion. Does not seem to regulate the retention of introns 1 to 5 of xol-1 pre-mRNA. Plays a role in the association of the dosage compensation complex proteins dpy-27 and sdc-3 with the hermaphrodite X chromosomes. Binds to 5'-UGCAUG-3' elements in intron 7 of the pre-mRNA of unc-32 to promote its alternative splicing in neuronal tissues. Binds to 5'-UGCAUG-3' elements in intron 4 of the pre-mRNA of egl-15 to promote its alternative splicing in body wall muscle tissues. Promotes binding of RNA-binding protein sup-12 to target RNA. Plays a role in male mating behavior. The protein is Sex determination protein fox-1 of Caenorhabditis elegans.